We begin with the raw amino-acid sequence, 166 residues long: Cyclic pyranopterin monophosphate synthase (166 aa).

Residues 83–85 (LCH) and 121–122 (ME) each bind substrate. Residue aspartate 136 is part of the active site.

This sequence belongs to the MoaC family. Homohexamer; trimer of dimers.

The catalysed reaction is (8S)-3',8-cyclo-7,8-dihydroguanosine 5'-triphosphate = cyclic pyranopterin phosphate + diphosphate. It functions in the pathway cofactor biosynthesis; molybdopterin biosynthesis. Functionally, catalyzes the conversion of (8S)-3',8-cyclo-7,8-dihydroguanosine 5'-triphosphate to cyclic pyranopterin monophosphate (cPMP). This is Cyclic pyranopterin monophosphate synthase from Syntrophobacter fumaroxidans (strain DSM 10017 / MPOB).